Reading from the N-terminus, the 585-residue chain is Probable glucomannan 4-beta-mannosyltransferase 7 (585 aa).

A helical transmembrane segment spans residues 87–107 (VIAPTLQVAVWVCMVMSVMLV). D188 is a catalytic residue. Positions 247 and 249 each coordinate substrate. D341 is a catalytic residue. 4 helical membrane-spanning segments follow: residues 420–440 (VVAPMVACVLYNIIVPLSVMI), 443–463 (LFIPIWGVAYIPMALLIITTI), 534–554 (LPEIGFSVFLIFCASYNLIFH), and 563–583 (LYLQGLAFLLLGFNFTGNFAC).

Belongs to the glycosyltransferase 2 family. Plant cellulose synthase-like A subfamily.

Its subcellular location is the golgi apparatus membrane. The enzyme catalyses GDP-mannose + (glucomannan)n = GDP + (glucomannan)n+1.. Probable mannan synthase which consists of a 4-beta-mannosyltransferase activity on mannan using GDP-mannose. The beta-1,4-mannan product is the backbone for galactomannan synthesis by galactomannan galactosyltransferase. Galactomannan is a noncellulosic polysaccharides of plant cell wall. The protein is Probable glucomannan 4-beta-mannosyltransferase 7 of Oryza sativa subsp. japonica (Rice).